Here is a 316-residue protein sequence, read N- to C-terminus: Lys-63-specific deubiquitinase BRCC36 (316 aa).

Ala-2 bears the N-acetylalanine mark. The MPN domain occupies 12 to 179 (VHLESDAFLV…YTCFQSIQAQ (168 aa)). Zn(2+) is bound by residues His-122, His-124, and Asp-135. A JAMM motif motif is present at residues 122–135 (HSHPHITVWPSHVD). Ser-258 carries the phosphoserine modification.

The protein belongs to the peptidase M67A family. BRCC36 subfamily. As to quaternary structure, component of the ARISC complex, at least composed of UIMC1/RAP80, ABRAXAS1, BRCC3/BRCC36, BABAM2 and BABAM1/NBA1. Component of the BRCA1-A complex, at least composed of BRCA1, BARD1, UIMC1/RAP80, ABRAXAS1, BRCC3/BRCC36, BABAM2 and BABAM1/NBA1. In the BRCA1-A complex, interacts directly with ABRAXAS1 and BABAM2. Component of the BRISC complex, at least composed of ABRAXAS2, BRCC3/BRCC36, BABAM2 and BABAM1/NBA1. Identified in a complex with SHMT2 and the other subunits of the BRISC complex. In the BRISC complex, interacts directly with ABRAXAS2. Identified in a complex with ABRAXAS2 and NUMA1. The BRISC complex interacts with the CSN complex. Component of the BRCA1/BRCA2 containing complex (BRCC), which also contains BRCA1, BRCA2, BARD1, BABAM2 and RAD51. BRCC is a ubiquitin E3 ligase complex that enhances cellular survival following DNA damage. Interacts with BRCA1. Binds polyubiquitin. Interacts with PWWP2B. Interacts with HDAC1; this interaction is enhanced in the presence of PWWP2B. It depends on Zn(2+) as a cofactor.

The protein localises to the nucleus. It localises to the cytoplasm. It is found in the cytoskeleton. Its subcellular location is the spindle pole. Metalloprotease that specifically cleaves 'Lys-63'-linked polyubiquitin chains. Does not have activity toward 'Lys-48'-linked polyubiquitin chains. Component of the BRCA1-A complex, a complex that specifically recognizes 'Lys-63'-linked ubiquitinated histones H2A and H2AX at DNA lesions sites, leading to target the BRCA1-BARD1 heterodimer to sites of DNA damage at double-strand breaks (DSBs). In the BRCA1-A complex, it specifically removes 'Lys-63'-linked ubiquitin on histones H2A and H2AX, antagonizing the RNF8-dependent ubiquitination at double-strand breaks (DSBs). Catalytic subunit of the BRISC complex, a multiprotein complex that specifically cleaves 'Lys-63'-linked ubiquitin in various substrates. Mediates the specific 'Lys-63'-specific deubiquitination associated with the COP9 signalosome complex (CSN), via the interaction of the BRISC complex with the CSN complex. The BRISC complex is required for normal mitotic spindle assembly and microtubule attachment to kinetochores via its role in deubiquitinating NUMA1. Plays a role in interferon signaling via its role in the deubiquitination of the interferon receptor IFNAR1; deubiquitination increases IFNAR1 activity by enhancing its stability and cell surface expression. Acts as a regulator of the NLRP3 inflammasome by mediating deubiquitination of NLRP3, leading to NLRP3 inflammasome assembly. Down-regulates the response to bacterial lipopolysaccharide (LPS) via its role in IFNAR1 deubiquitination. Deubiquitinates HDAC1 and PWWP2B leading to their stabilization. This chain is Lys-63-specific deubiquitinase BRCC36 (BRCC3), found in Callithrix jacchus (White-tufted-ear marmoset).